A 322-amino-acid chain; its full sequence is Probable 5-dehydro-4-deoxyglucarate dehydratase 2 (322 aa).

Belongs to the DapA family.

It catalyses the reaction 5-dehydro-4-deoxy-D-glucarate + H(+) = 2,5-dioxopentanoate + CO2 + H2O. It functions in the pathway carbohydrate acid metabolism; D-glucarate degradation; 2,5-dioxopentanoate from D-glucarate: step 2/2. This Streptomyces coelicolor (strain ATCC BAA-471 / A3(2) / M145) protein is Probable 5-dehydro-4-deoxyglucarate dehydratase 2.